Consider the following 409-residue polypeptide: Magnesium-protoporphyrin IX monomethyl ester [oxidative] cyclase, chloroplastic (409 aa).

Disordered stretches follow at residues 1 to 23 (MAAEMALVKPISKFSSPKLSNPS) and 36 to 60 (RMSASSSPPPPTTATSKSKKGTKKE). A chloroplast-targeting transit peptide spans 1–36 (MAAEMALVKPISKFSSPKLSNPSKFLSGRRFSTVIR). Polar residues predominate over residues 13-23 (KFSSPKLSNPS).

Belongs to the AcsF family. Part of the FLU-containing chloroplast membrane complex composed of FLU, CRD1, PORB, PORC, CHLP and HEMA1. Interacts with YCF54 in chloroplasts. It depends on Fe cation as a cofactor.

The protein localises to the plastid. Its subcellular location is the chloroplast inner membrane. It is found in the chloroplast thylakoid membrane. It carries out the reaction Mg-protoporphyrin IX 13-monomethyl ester + 3 NADPH + 3 O2 + 2 H(+) = 3,8-divinyl protochlorophyllide a + 3 NADP(+) + 5 H2O. The protein operates within porphyrin-containing compound metabolism; chlorophyll biosynthesis. Catalytic component of the MgProto monomethylester (MgProtoME) cyclase complex that catalyzes the formation of the isocyclic ring in chlorophyll biosynthesis. Mediates the cyclase reaction, which results in the formation of divinylprotochlorophyllide (Pchlide) characteristic of all chlorophylls from magnesium-protoporphyrin IX 13-monomethyl ester (MgPMME). The polypeptide is Magnesium-protoporphyrin IX monomethyl ester [oxidative] cyclase, chloroplastic (Arabidopsis thaliana (Mouse-ear cress)).